The sequence spans 338 residues: UbiA prenyltransferase domain-containing protein 1 (338 aa).

Positions 1-39 are disordered; the sequence is MAAVQAPGEKINIQAGETTQVGDTDQQRNDWPEEDRLPE. At Ala-2 the chain carries N-acetylalanine. The span at 15–24 shows a compositional bias: polar residues; sequence AGETTQVGDT. Over residues 25–39 the composition is skewed to basic and acidic residues; it reads DQQRNDWPEEDRLPE. 8 consecutive transmembrane segments (helical) span residues 83–103, 134–154, 160–180, 188–208, 209–229, 245–267, 277–297, and 315–335; these read LLLG…LVNT, FGVF…YLST, LALI…GIGF, LVIL…VQVG, SLAI…EAIL, IVTL…LLFL, THCS…FSLE, and LNLL…AGSL.

It belongs to the UbiA prenyltransferase family. In terms of assembly, interacts with HMGCR and SOAT1.

The protein resides in the endoplasmic reticulum membrane. It is found in the golgi apparatus membrane. It localises to the mitochondrion membrane. The enzyme catalyses menadiol + (2E,6E,10E)-geranylgeranyl diphosphate = menaquinol-4 + diphosphate. It carries out the reaction all-trans-decaprenyl diphosphate + 4-hydroxybenzoate = 4-hydroxy-3-(all-trans-decaprenyl)benzoate + diphosphate. It functions in the pathway quinol/quinone metabolism; menaquinone biosynthesis. Its pathway is cofactor biosynthesis; ubiquinone biosynthesis. Prenyltransferase that mediates the formation of menaquinone-4 (MK-4) and coenzyme Q10. MK-4 is a vitamin K2 isoform required for endothelial cell development. Mediates the conversion of phylloquinone (PK) into MK-4, probably by cleaving the side chain of phylloquinone (PK) to release 2-methyl-1,4-naphthoquinone (menadione; K3) and then prenylating it with geranylgeranyl pyrophosphate (GGPP) to form MK-4. Also plays a role in cardiovascular development independently of MK-4 biosynthesis, by acting as a coenzyme Q10 biosynthetic enzyme: coenzyme Q10, also named ubiquinone, plays an important antioxidant role in the cardiovascular system. Mediates biosynthesis of coenzyme Q10 in the Golgi membrane, leading to protect cardiovascular tissues from NOS3/eNOS-dependent oxidative stress. The sequence is that of UbiA prenyltransferase domain-containing protein 1 (Ubiad1) from Rattus norvegicus (Rat).